Here is a 158-residue protein sequence, read N- to C-terminus: CD-NTase/cGAS isopeptidase (158 aa).

E38 acts as the Proton donor/acceptor in catalysis. Zn(2+) is bound by residues H100, H102, and D113.

This sequence belongs to the peptidase M67B family. Cap3 isopeptidase subfamily.

In terms of biological role, metalloprotease priming reversal component of a CBASS antivirus system. CBASS (cyclic oligonucleotide-based antiphage signaling system) provides immunity against bacteriophages. The CD-NTase protein synthesizes cyclic nucleotides in response to infection; these serve as specific second messenger signals. The signals activate a diverse range of effectors, leading to bacterial cell death and thus abortive phage infection. A type II-A(GA) CBASS system. Reverses the primed state of CdnA, the CD-NTase. Its function is as follows. The capV-cdnA-cap2-cap3 operon provides about 10(4)-fold protection in strain BWHPSA011 against infection by phage PaMx41. In P.aeruginosa strain PAO1 it confers protection against phages PaMx41 and JBD18 but not JBD67 (JBD18 and JBD67 do not replicate in BWHPSA011 / Pa011). When acb2 in JBD67 is deleted this CBASS operon then protects against JDB67 also. This CBASS system limits prophage induction of lysogenized JBD67 as well as viral lytic replication. In Pseudomonas aeruginosa (strain BWHPSA011 / Pa011), this protein is CD-NTase/cGAS isopeptidase.